We begin with the raw amino-acid sequence, 502 residues long: ATP synthase subunit alpha (502 aa).

169–176 lines the ATP pocket; the sequence is GDRQTGKT.

It belongs to the ATPase alpha/beta chains family. As to quaternary structure, F-type ATPases have 2 components, CF(1) - the catalytic core - and CF(0) - the membrane proton channel. CF(1) has five subunits: alpha(3), beta(3), gamma(1), delta(1), epsilon(1). CF(0) has three main subunits: a(1), b(2) and c(9-12). The alpha and beta chains form an alternating ring which encloses part of the gamma chain. CF(1) is attached to CF(0) by a central stalk formed by the gamma and epsilon chains, while a peripheral stalk is formed by the delta and b chains.

It is found in the cell membrane. It carries out the reaction ATP + H2O + 4 H(+)(in) = ADP + phosphate + 5 H(+)(out). Its function is as follows. Produces ATP from ADP in the presence of a proton gradient across the membrane. The alpha chain is a regulatory subunit. The chain is ATP synthase subunit alpha from Desulfitobacterium hafniense (strain DSM 10664 / DCB-2).